We begin with the raw amino-acid sequence, 221 residues long: Transcription factor bHLH126 (221 aa).

Disordered stretches follow at residues 1–46 (MDPY…KKLL) and 104–132 (RRDELSRETGQGYKSNPDPGKTGSDVGKS). The region spanning 42–94 (KKKLLHRDIERQRRQEMATLFATLRTHLPLKYIKGKRAVSDHVNGAVNFIKDT) is the bHLH domain.

As to quaternary structure, homodimer.

The protein resides in the nucleus. This is Transcription factor bHLH126 (BHLH126) from Arabidopsis thaliana (Mouse-ear cress).